A 214-amino-acid chain; its full sequence is Thymidylate kinase (214 aa).

10–17 (GGEGAGKS) serves as a coordination point for ATP.

This sequence belongs to the thymidylate kinase family.

It carries out the reaction dTMP + ATP = dTDP + ADP. Functionally, phosphorylation of dTMP to form dTDP in both de novo and salvage pathways of dTTP synthesis. This is Thymidylate kinase from Brucella suis (strain ATCC 23445 / NCTC 10510).